Consider the following 389-residue polypeptide: Trans-2-enoyl-CoA reductase [NADH] (389 aa).

Residues 47–52 (GASTGY), 73–74 (FE), 110–111 (DA), and 138–139 (LA) each bind NAD(+). Tyr-224 serves as a coordination point for substrate. The Proton donor role is filled by Tyr-234. Residues Lys-243 and 272–274 (LVT) each bind NAD(+).

It belongs to the TER reductase family. In terms of assembly, monomer.

The catalysed reaction is a 2,3-saturated acyl-CoA + NAD(+) = a (2E)-enoyl-CoA + NADH + H(+). The protein operates within lipid metabolism; fatty acid biosynthesis. Involved in the fatty acid synthesis (FAS II). Catalyzes the reduction of a carbon-carbon double bond in an enoyl moiety that is covalently linked to a coenzyme A (CoA). This is Trans-2-enoyl-CoA reductase [NADH] from Clostridium perfringens (strain SM101 / Type A).